Here is a 199-residue protein sequence, read N- to C-terminus: Holliday junction branch migration complex subunit RuvA (199 aa).

Positions Met1–Leu64 are domain I. The segment at Asp65–Glu143 is domain II. Positions Gln144–Leu148 are flexible linker. Residues Leu148–Arg199 form a domain III region.

It belongs to the RuvA family. Homotetramer. Forms an RuvA(8)-RuvB(12)-Holliday junction (HJ) complex. HJ DNA is sandwiched between 2 RuvA tetramers; dsDNA enters through RuvA and exits via RuvB. An RuvB hexamer assembles on each DNA strand where it exits the tetramer. Each RuvB hexamer is contacted by two RuvA subunits (via domain III) on 2 adjacent RuvB subunits; this complex drives branch migration. In the full resolvosome a probable DNA-RuvA(4)-RuvB(12)-RuvC(2) complex forms which resolves the HJ.

It is found in the cytoplasm. Its function is as follows. The RuvA-RuvB-RuvC complex processes Holliday junction (HJ) DNA during genetic recombination and DNA repair, while the RuvA-RuvB complex plays an important role in the rescue of blocked DNA replication forks via replication fork reversal (RFR). RuvA specifically binds to HJ cruciform DNA, conferring on it an open structure. The RuvB hexamer acts as an ATP-dependent pump, pulling dsDNA into and through the RuvAB complex. HJ branch migration allows RuvC to scan DNA until it finds its consensus sequence, where it cleaves and resolves the cruciform DNA. The polypeptide is Holliday junction branch migration complex subunit RuvA (Syntrophomonas wolfei subsp. wolfei (strain DSM 2245B / Goettingen)).